Reading from the N-terminus, the 420-residue chain is Tyrosine--tRNA ligase (420 aa).

Residue tyrosine 33 coordinates L-tyrosine. A 'HIGH' region motif is present at residues 38-47; that stretch reads PTADSLHVGH. L-tyrosine-binding residues include tyrosine 167 and glutamine 171. Residues 227 to 231 carry the 'KMSKS' region motif; it reads KFGKT. Lysine 230 is a binding site for ATP. Positions 353 to 419 constitute an S4 RNA-binding domain; it reads LTVADLLVKV…GKRNYALVKV (67 aa).

Belongs to the class-I aminoacyl-tRNA synthetase family. TyrS type 1 subfamily. As to quaternary structure, homodimer.

It is found in the cytoplasm. It catalyses the reaction tRNA(Tyr) + L-tyrosine + ATP = L-tyrosyl-tRNA(Tyr) + AMP + diphosphate + H(+). Catalyzes the attachment of tyrosine to tRNA(Tyr) in a two-step reaction: tyrosine is first activated by ATP to form Tyr-AMP and then transferred to the acceptor end of tRNA(Tyr). The protein is Tyrosine--tRNA ligase of Anaeromyxobacter dehalogenans (strain 2CP-1 / ATCC BAA-258).